Reading from the N-terminus, the 187-residue chain is Pterin-4-alpha-carbinolamine dehydratase 2, mitochondrial (187 aa).

A mitochondrion-targeting transit peptide spans 1 to 33; that stretch reads MSRLLLPKLFSISRTQVPAASLFNNLYRRHKRF.

This sequence belongs to the pterin-4-alpha-carbinolamine dehydratase family.

It localises to the mitochondrion. The catalysed reaction is (4aS,6R)-4a-hydroxy-L-erythro-5,6,7,8-tetrahydrobiopterin = (6R)-L-erythro-6,7-dihydrobiopterin + H2O. Its function is as follows. Involved in tetrahydrobiopterin biosynthesis. Possesses pterin-4-alpha-carbinolamine dehydratase activity when expressed in a bacterial heterolgous system. The sequence is that of Pterin-4-alpha-carbinolamine dehydratase 2, mitochondrial from Arabidopsis thaliana (Mouse-ear cress).